Reading from the N-terminus, the 524-residue chain is Chromosomal replication initiator protein DnaA (524 aa).

Residues 1 to 105 (MSQNSSSLLE…EQEIPETPAQ (105 aa)) form a domain I, interacts with DnaA modulators region. The tract at residues 95–183 (PEQEIPETPA…PAHNPNREVS (89 aa)) is disordered. The interval 106 to 182 (QEFKYQPDAP…TPAHNPNREV (77 aa)) is domain II. Over residues 148–158 (APEPHPAPIAD) the composition is skewed to pro residues. Residues 183-399 (SLNPKYTFES…GALIRVSAYS (217 aa)) are domain III, AAA+ region. ATP contacts are provided by G227, G229, K230, and T231. The domain IV, binds dsDNA stretch occupies residues 400 to 524 (SLINQPIDKE…TQLIKSRGRN (125 aa)).

The protein belongs to the DnaA family. As to quaternary structure, oligomerizes as a right-handed, spiral filament on DNA at oriC.

The protein localises to the cytoplasm. Its function is as follows. Plays an essential role in the initiation and regulation of chromosomal replication. ATP-DnaA binds to the origin of replication (oriC) to initiate formation of the DNA replication initiation complex once per cell cycle. Binds the DnaA box (a 9 base pair repeat at the origin) and separates the double-stranded (ds)DNA. Forms a right-handed helical filament on oriC DNA; dsDNA binds to the exterior of the filament while single-stranded (ss)DNA is stabiized in the filament's interior. The ATP-DnaA-oriC complex binds and stabilizes one strand of the AT-rich DNA unwinding element (DUE), permitting loading of DNA polymerase. After initiation quickly degrades to an ADP-DnaA complex that is not apt for DNA replication. Binds acidic phospholipids. This Corynebacterium glutamicum (strain R) protein is Chromosomal replication initiator protein DnaA.